Here is a 135-residue protein sequence, read N- to C-terminus: MRILGIDVGNKTIGVALSDPLGFTAQGITTIRRKNEEEDIKELKELCEKYEVDTIVCGLPKNMNGTIGFQSEKVLGFCEVIKQNINVPIKMWDERLTTVTANRAMLEADLSRKKRKKLVDKVAATYILQGYLNSI.

The protein belongs to the YqgF nuclease family.

The protein resides in the cytoplasm. In terms of biological role, could be a nuclease involved in processing of the 5'-end of pre-16S rRNA. This Clostridium acetobutylicum (strain ATCC 824 / DSM 792 / JCM 1419 / IAM 19013 / LMG 5710 / NBRC 13948 / NRRL B-527 / VKM B-1787 / 2291 / W) protein is Putative pre-16S rRNA nuclease.